A 245-amino-acid chain; its full sequence is MINVSTSPRQTLDWTALKPADGSPAVEWRISDSPVPYPEAVATMEARAAAIAAGEATELVWLLEHPPLYTAGTSGHASDLLEERFPLFTTGRGGQLTYHGPGQRVAYVMLDLKRRRPDVRAYVAALEQWIIATLDAFNIRCERREDRVGVWVRRPDKGVGYEDKIAAIGVRLKRWVSLHGIAINVEPDLSHFKAIVPCGISDPRYGVTSLVDLGLPVVMTDVDIALRAAFENIFGETRAAAPAGI.

The region spanning Gly-54–Arg-238 is the BPL/LPL catalytic domain. Substrate-binding positions include Arg-92–His-99, Ala-167–Gly-169, and Gly-180–Ala-182. The active-site Acyl-thioester intermediate is Cys-198.

This sequence belongs to the LipB family.

It localises to the cytoplasm. The enzyme catalyses octanoyl-[ACP] + L-lysyl-[protein] = N(6)-octanoyl-L-lysyl-[protein] + holo-[ACP] + H(+). It functions in the pathway protein modification; protein lipoylation via endogenous pathway; protein N(6)-(lipoyl)lysine from octanoyl-[acyl-carrier-protein]: step 1/2. Its function is as follows. Catalyzes the transfer of endogenously produced octanoic acid from octanoyl-acyl-carrier-protein onto the lipoyl domains of lipoate-dependent enzymes. Lipoyl-ACP can also act as a substrate although octanoyl-ACP is likely to be the physiological substrate. The sequence is that of Octanoyltransferase from Rhodopseudomonas palustris (strain TIE-1).